The sequence spans 360 residues: Phospho-N-acetylmuramoyl-pentapeptide-transferase (360 aa).

Helical transmembrane passes span 21 to 41 (YVTF…LWWG), 74 to 94 (MGGL…GDLG), 97 to 117 (YVWV…IDDY), 135 to 155 (LLQS…ADTA), 168 to 188 (VMPQ…VGSS), 199 to 219 (GLAI…AYLS), 236 to 256 (AGEL…FLWF), 263 to 283 (VFMG…IAVL), 288 to 308 (ILLV…ILQV), and 338 to 358 (VIVR…ATLK).

This sequence belongs to the glycosyltransferase 4 family. MraY subfamily. The cofactor is Mg(2+).

Its subcellular location is the cell inner membrane. It catalyses the reaction UDP-N-acetyl-alpha-D-muramoyl-L-alanyl-gamma-D-glutamyl-meso-2,6-diaminopimeloyl-D-alanyl-D-alanine + di-trans,octa-cis-undecaprenyl phosphate = di-trans,octa-cis-undecaprenyl diphospho-N-acetyl-alpha-D-muramoyl-L-alanyl-D-glutamyl-meso-2,6-diaminopimeloyl-D-alanyl-D-alanine + UMP. It participates in cell wall biogenesis; peptidoglycan biosynthesis. Functionally, catalyzes the initial step of the lipid cycle reactions in the biosynthesis of the cell wall peptidoglycan: transfers peptidoglycan precursor phospho-MurNAc-pentapeptide from UDP-MurNAc-pentapeptide onto the lipid carrier undecaprenyl phosphate, yielding undecaprenyl-pyrophosphoryl-MurNAc-pentapeptide, known as lipid I. In Shewanella piezotolerans (strain WP3 / JCM 13877), this protein is Phospho-N-acetylmuramoyl-pentapeptide-transferase.